We begin with the raw amino-acid sequence, 173 residues long: Oleosin 18.5 kDa (173 aa).

Residues 1-45 (MADTARGTHHDIIGRDQYPMMGRDRDQYQMSGRGSDYSKSRQIAK) form a polar region. Residues 46 to 117 (AATAVTAGGS…AAITVFSWIY (72 aa)) form a hydrophobic region. 3 consecutive transmembrane segments (helical) span residues 54 to 74 (GSLL…LTVA), 76 to 96 (PLLV…ALLI), and 97 to 117 (TGFL…SWIY). A disordered region spans residues 151–173 (YYGQQHTGGEHDRDRTRGGQHTT). The span at 158–167 (GGEHDRDRTR) shows a compositional bias: basic and acidic residues.

The protein belongs to the oleosin family.

It is found in the lipid droplet. The protein resides in the membrane. May have a structural role to stabilize the lipid body during desiccation of the seed by preventing coalescence of the oil. Probably interacts with both lipid and phospholipid moieties of lipid bodies. May also provide recognition signals for specific lipase anchorage in lipolysis during seedling growth. This is Oleosin 18.5 kDa from Arabidopsis thaliana (Mouse-ear cress).